Reading from the N-terminus, the 118-residue chain is Large ribosomal subunit protein uL22 (118 aa).

It belongs to the universal ribosomal protein uL22 family. As to quaternary structure, part of the 50S ribosomal subunit.

In terms of biological role, this protein binds specifically to 23S rRNA; its binding is stimulated by other ribosomal proteins, e.g. L4, L17, and L20. It is important during the early stages of 50S assembly. It makes multiple contacts with different domains of the 23S rRNA in the assembled 50S subunit and ribosome. Functionally, the globular domain of the protein is located near the polypeptide exit tunnel on the outside of the subunit, while an extended beta-hairpin is found that lines the wall of the exit tunnel in the center of the 70S ribosome. The polypeptide is Large ribosomal subunit protein uL22 (Nostoc punctiforme (strain ATCC 29133 / PCC 73102)).